The sequence spans 191 residues: dCTP deaminase (191 aa).

DCTP-binding positions include 112 to 117 (KSTYAR), 136 to 138 (TLE), glutamine 157, tyrosine 173, and glutamine 183. Residue glutamate 138 is the Proton donor/acceptor of the active site.

This sequence belongs to the dCTP deaminase family. In terms of assembly, homotrimer.

It carries out the reaction dCTP + H2O + H(+) = dUTP + NH4(+). It participates in pyrimidine metabolism; dUMP biosynthesis; dUMP from dCTP (dUTP route): step 1/2. Functionally, catalyzes the deamination of dCTP to dUTP. The sequence is that of dCTP deaminase from Xylella fastidiosa (strain M12).